An 882-amino-acid chain; its full sequence is Valine--tRNA ligase (882 aa).

Positions 50-60 match the 'HIGH' region motif; sequence PNVTGKLHLGH. The short motif at 526–530 is the 'KMSKS' region element; that stretch reads KMSKS. Residue Lys529 participates in ATP binding. The stretch at 810 to 881 forms a coiled coil; the sequence is LEALIDLDLE…VLERIETLKE (72 aa).

The protein belongs to the class-I aminoacyl-tRNA synthetase family. ValS type 1 subfamily. In terms of assembly, monomer.

It localises to the cytoplasm. The catalysed reaction is tRNA(Val) + L-valine + ATP = L-valyl-tRNA(Val) + AMP + diphosphate. In terms of biological role, catalyzes the attachment of valine to tRNA(Val). As ValRS can inadvertently accommodate and process structurally similar amino acids such as threonine, to avoid such errors, it has a 'posttransfer' editing activity that hydrolyzes mischarged Thr-tRNA(Val) in a tRNA-dependent manner. The polypeptide is Valine--tRNA ligase (Listeria innocua serovar 6a (strain ATCC BAA-680 / CLIP 11262)).